The sequence spans 257 residues: Deoxyribose-phosphate aldolase (257 aa).

Asp-102 (proton donor/acceptor) is an active-site residue. Catalysis depends on Lys-166, which acts as the Schiff-base intermediate with acetaldehyde. Residue Lys-198 is the Proton donor/acceptor of the active site.

The protein belongs to the DeoC/FbaB aldolase family. DeoC type 2 subfamily.

It localises to the cytoplasm. The catalysed reaction is 2-deoxy-D-ribose 5-phosphate = D-glyceraldehyde 3-phosphate + acetaldehyde. It functions in the pathway carbohydrate degradation; 2-deoxy-D-ribose 1-phosphate degradation; D-glyceraldehyde 3-phosphate and acetaldehyde from 2-deoxy-alpha-D-ribose 1-phosphate: step 2/2. Functionally, catalyzes a reversible aldol reaction between acetaldehyde and D-glyceraldehyde 3-phosphate to generate 2-deoxy-D-ribose 5-phosphate. The polypeptide is Deoxyribose-phosphate aldolase (Shewanella sediminis (strain HAW-EB3)).